The primary structure comprises 393 residues: MSSRYSERNGLSETEKMTLPKVRKRKAQLVDEIEALKNEVREVDEELDQVYYTHPKSKEYHKIVVNGRKKFNQDPWKALDWLASRNVVAKDPQALALWMKAGEGLSKSAIGEILGDNRPFALETLDRFTKEHKLHDVPIVPALRQYLFSFRLPGESQKINRILEKFAEVYANQNPSYGNADQAHTVAYSCIMVNTLLHNPNVKDKPSLEKYIEMNEQLLEKGAITIEQLTEVYESVSVTQFKIPDEVSTSGKGTVNDILLHAEREGWLFKQSSNPLFSGALSWKKRWFVLSENCLYYFDQMTDKEPKGIITLANVGIRKVEAPSRPFMFEIFSLSDGQIKACKTEQDGRLVEGRHSIYKICAVNDEDMRSWINAISRMMAPQQHLLARPKSTH.

The span at 1 to 12 shows a compositional bias: polar residues; the sequence is MSSRYSERNGLS. The disordered stretch occupies residues 1–21; the sequence is MSSRYSERNGLSETEKMTLPK. Residues 12–54 are a coiled coil; the sequence is SETEKMTLPKVRKRKAQLVDEIEALKNEVREVDEELDQVYYTH. An SEC7 domain is found at 53 to 239; it reads THPKSKEYHK…TEVYESVSVT (187 aa). Positions 261 to 377 constitute a PH domain; it reads HAEREGWLFK…MRSWINAISR (117 aa).

Promotes guanine-nucleotide exchange on ARF. Promotes the activation of ARF through replacement of GDP with GTP. Plays a role in cell shedding during embryogenesis, probably by promoting the endocytosis of cell adhesion molecules. The chain is GTP exchange factor for ARFs 1 (grp-1) from Caenorhabditis elegans.